Reading from the N-terminus, the 295-residue chain is MIQVKASTGLVALLGHPVQHSLSPLMHNAAFAAGGQNLVYLAFDVKPGDLAAALAGLKALGFRGANVTVPHKEAIIPYLDAVDPVAARIGAVNTIVNEDRCLKGYNTDGSGFLRSLEEAGFDPAGKRAVILGAGGAARAVAFALATAGCGSLVLANRTPERATELAGALAGAGLPAPVVYRLGDAGMRSEVEAADLVLNTTSLGMWPRVEETPLPPDWFRPGQWVYDLVYNPLETKFLAGARRRGCRVISGLDMLLYQGAAAFTLWTGREAPVAVMDRVLREAMGASSGGPAAGR.

Shikimate contacts are provided by residues 21 to 23 (SLS) and Thr68. Lys72 (proton acceptor) is an active-site residue. Asn93 and Asp108 together coordinate shikimate. NADP(+) contacts are provided by residues 132–136 (GAGGA), 156–161 (NRTPER), and Leu228. Tyr230 lines the shikimate pocket. Gly251 is an NADP(+) binding site.

This sequence belongs to the shikimate dehydrogenase family. As to quaternary structure, homodimer.

The catalysed reaction is shikimate + NADP(+) = 3-dehydroshikimate + NADPH + H(+). Its pathway is metabolic intermediate biosynthesis; chorismate biosynthesis; chorismate from D-erythrose 4-phosphate and phosphoenolpyruvate: step 4/7. Involved in the biosynthesis of the chorismate, which leads to the biosynthesis of aromatic amino acids. Catalyzes the reversible NADPH linked reduction of 3-dehydroshikimate (DHSA) to yield shikimate (SA). This is Shikimate dehydrogenase (NADP(+)) from Moorella thermoacetica (strain ATCC 39073 / JCM 9320).